A 465-amino-acid polypeptide reads, in one-letter code: Muscarinic acetylcholine receptor M2 (465 aa).

Residues Met1–Glu21 lie on the Extracellular side of the membrane. N-linked (GlcNAc...) asparagine glycosylation is found at Asn2, Asn3, and Asn6. A helical membrane pass occupies residues Val22 to Met44. Residues Val45 to Asn58 are Cytoplasmic-facing. Residues Tyr59 to Tyr79 traverse the membrane as a helical segment. Over Thr80 to Asp96 the chain is Extracellular. A disulfide bridge links Cys95 with Cys175. The chain crosses the membrane as a helical span at residues Leu97–Phe118. An Important for signaling motif is present at residues Asp119–Tyr121. The Cytoplasmic segment spans residues Asp119 to Met138. A helical membrane pass occupies residues Ala139 to Trp161. Residues Gln162–Ala183 are Extracellular-facing. The helical transmembrane segment at Ala184 to Ile208 threads the bilayer. The Cytoplasmic portion of the chain corresponds to Ser209–Arg386. The interval Lys217–Ser319 is disordered. Residue Ser231 is modified to Phosphoserine. Positions Gly253–Val269 are enriched in basic and acidic residues. Polar residues-rich tracts occupy residues Asn283–Ala292 and Asp303–Gly312. The helical transmembrane segment at Thr387–Asn409 threads the bilayer. Residues Thr410–Pro417 are Extracellular-facing. Cys412 and Cys415 are oxidised to a cystine. Residues Asn418–Leu441 form a helical membrane-spanning segment. The short motif at Asn435 to Tyr439 is the Important for signaling element. Residues Cys442–Arg465 are Cytoplasmic-facing. A phosphothreonine mark is found at Thr445, Thr449, and Thr464.

This sequence belongs to the G-protein coupled receptor 1 family. Muscarinic acetylcholine receptor subfamily. CHRM2 sub-subfamily. In terms of assembly, interacts with ARRB1 and ARRB2. Interacts with RACK1; the interaction regulates CHRM2 internalization. Post-translationally, phosphorylated in response to agonist treatment.

It localises to the cell membrane. Its subcellular location is the postsynaptic cell membrane. In terms of biological role, the muscarinic acetylcholine receptor mediates various cellular responses, including inhibition of adenylate cyclase, breakdown of phosphoinositides and modulation of potassium channels through the action of G proteins. Primary transducing effect is adenylate cyclase inhibition. Signaling promotes phospholipase C activity, leading to the release of inositol trisphosphate (IP3); this then triggers calcium ion release into the cytosol. The sequence is that of Muscarinic acetylcholine receptor M2 (CHRM2) from Bos taurus (Bovine).